The following is a 664-amino-acid chain: Intraflagellar transport protein 70A1 (664 aa).

7 TPR repeats span residues 11–44 (DGEFTAVVYRLIRDSRYSEAVQLLSAELQRSSRS), 45–78 (RAGLSLLAYCYYRLQEFELAAECYEQLSQMHPEL), 153–186 (PDGLVNMGCLLYKEGHYEAACSKFLAALQASGYQ), 188–220 (DLSYNLALAYYSSRQYAPALKHIADIIERGIRQ), 393–423 (TKQVQEARHNRDDEIIKKAMNEYDETLEKYI), 424–456 (PVLMAQAKIYWNLENYPMVEKIFRKSVEFCNDH), and 458–491 (VWKLNVAHVLFMQENKYKEAIGFYEPIVKKNYDN). Residues 507-534 (YIMTSQNEEAEELMRKIEKEEEQLSYGD) are a coiled coil. Residues 543–576 (CIVNLVIGTLYCAKGNYDFGISRVIKSLEPYHKK) form a TPR 8 repeat.

Belongs to the TTC30/dfy-1/fleer family. Interacts wit the IFT B complex component IFT52.

The protein localises to the cell projection. Its subcellular location is the cilium. Required for polyglutamylation of axonemal tubulin. Plays a role in anterograde intraflagellar transport (IFT), the process by which cilia precursors are transported from the base of the cilium to the site of their incorporation at the tip. The protein is Intraflagellar transport protein 70A1 (Ift70a1) of Mus musculus (Mouse).